The sequence spans 415 residues: tRNA(Met) cytidine acetate ligase (415 aa).

ATP-binding positions include 7 to 20 (VVEY…HRYH), Gly101, Asn162, and 187 to 188 (RI).

The protein belongs to the TmcAL family.

The protein localises to the cytoplasm. The enzyme catalyses cytidine(34) in elongator tRNA(Met) + acetate + ATP = N(4)-acetylcytidine(34) in elongator tRNA(Met) + AMP + diphosphate. In terms of biological role, catalyzes the formation of N(4)-acetylcytidine (ac(4)C) at the wobble position of elongator tRNA(Met), using acetate and ATP as substrates. First activates an acetate ion to form acetyladenylate (Ac-AMP) and then transfers the acetyl group to tRNA to form ac(4)C34. The protein is tRNA(Met) cytidine acetate ligase of Bacillus velezensis (strain DSM 23117 / BGSC 10A6 / LMG 26770 / FZB42) (Bacillus amyloliquefaciens subsp. plantarum).